A 257-amino-acid polypeptide reads, in one-letter code: Probable pectate lyase G (257 aa).

The N-terminal stretch at 1 to 24 (MPVLSKLLPTLTLTLPLLAGPCLA) is a signal peptide.

Belongs to the polysaccharide lyase 3 family. Ca(2+) is required as a cofactor.

It is found in the secreted. It catalyses the reaction Eliminative cleavage of (1-&gt;4)-alpha-D-galacturonan to give oligosaccharides with 4-deoxy-alpha-D-galact-4-enuronosyl groups at their non-reducing ends.. Functionally, pectinolytic enzyme consist of four classes of enzymes: pectin lyase, polygalacturonase, pectin methylesterase and rhamnogalacturonase. Among pectinolytic enzymes, pectin lyase is the most important in depolymerization of pectin, since it cleaves internal glycosidic bonds of highly methylated pectins. Favors pectate, the anion, over pectin, the methyl ester. This chain is Probable pectate lyase G (plyG), found in Emericella nidulans (strain FGSC A4 / ATCC 38163 / CBS 112.46 / NRRL 194 / M139) (Aspergillus nidulans).